The chain runs to 337 residues: ATP-dependent 6-phosphofructokinase (337 aa).

Gly-11 contributes to the ATP binding site. Residue 21 to 25 (RAVVR) coordinates ADP. ATP contacts are provided by residues 72 to 73 (RY) and 102 to 105 (GDGS). Mg(2+) is bound at residue Asp-103. Residue 125–127 (TID) coordinates substrate. The Proton acceptor role is filled by Asp-127. Arg-154 lines the ADP pocket. Residues Arg-162 and 169–171 (MGR) contribute to the substrate site. ADP is bound by residues 185-187 (GAD), Lys-212, and 214-216 (KNH). Residues Glu-223, Arg-245, and 251–254 (HILR) each bind substrate.

This sequence belongs to the phosphofructokinase type A (PFKA) family. ATP-dependent PFK group I subfamily. Prokaryotic clade 'B1' sub-subfamily. Homotetramer. Requires Mg(2+) as cofactor.

It is found in the cytoplasm. It catalyses the reaction beta-D-fructose 6-phosphate + ATP = beta-D-fructose 1,6-bisphosphate + ADP + H(+). Its pathway is carbohydrate degradation; glycolysis; D-glyceraldehyde 3-phosphate and glycerone phosphate from D-glucose: step 3/4. With respect to regulation, allosterically activated by ADP and other diphosphonucleosides, and allosterically inhibited by phosphoenolpyruvate. Catalyzes the phosphorylation of D-fructose 6-phosphate to fructose 1,6-bisphosphate by ATP, the first committing step of glycolysis. The polypeptide is ATP-dependent 6-phosphofructokinase (Streptococcus pyogenes serotype M28 (strain MGAS6180)).